A 309-amino-acid polypeptide reads, in one-letter code: THO complex subunit Tho3 (309 aa).

6 WD repeats span residues 22–61 (GQQG…FKFT), 65–107 (GNRG…PIAE), 109–148 (ESNY…IMET), 192–231 (AHNS…CERS), 234–273 (RMDY…QIWK), and 275–309 (PTNG…IFGL).

It belongs to the THOC3 family. Component of the transcription/export (TREX) complex, which is at least is formed of SUB2, TEX1 and YRA1 and the THO complex composed of HPR1, MFT1, THO2 and THP1.

It localises to the nucleus. In terms of biological role, component of the TREX complex, which operates in coupling transcription elongation to mRNA export. The polypeptide is THO complex subunit Tho3 (THO3) (Schizosaccharomyces pombe (strain 972 / ATCC 24843) (Fission yeast)).